The chain runs to 381 residues: Succinyl-diaminopimelate desuccinylase (381 aa).

A Zn(2+)-binding site is contributed by His71. Residue Asp73 is part of the active site. Residue Asp104 participates in Zn(2+) binding. Glu138 serves as the catalytic Proton acceptor. Residues Glu139, Glu167, and His353 each coordinate Zn(2+).

Belongs to the peptidase M20A family. DapE subfamily. As to quaternary structure, homodimer. The cofactor is Zn(2+). Co(2+) is required as a cofactor.

It carries out the reaction N-succinyl-(2S,6S)-2,6-diaminopimelate + H2O = (2S,6S)-2,6-diaminopimelate + succinate. Its pathway is amino-acid biosynthesis; L-lysine biosynthesis via DAP pathway; LL-2,6-diaminopimelate from (S)-tetrahydrodipicolinate (succinylase route): step 3/3. Its function is as follows. Catalyzes the hydrolysis of N-succinyl-L,L-diaminopimelic acid (SDAP), forming succinate and LL-2,6-diaminopimelate (DAP), an intermediate involved in the bacterial biosynthesis of lysine and meso-diaminopimelic acid, an essential component of bacterial cell walls. The chain is Succinyl-diaminopimelate desuccinylase from Shewanella piezotolerans (strain WP3 / JCM 13877).